An 881-amino-acid polypeptide reads, in one-letter code: Formin-like protein 10 (881 aa).

Residues 1–24 form the signal peptide; sequence MAMKRVVFLLLLVAASALVKSSRG. The disordered stretch occupies residues 194–223; sequence LTPSNSLNMEPPSPYYPSKSAHKHQGVAPP. Residues 236–256 form a helical membrane-spanning segment; that stretch reads VVLIAVLPTAALSFLAAFLCF. The segment covering 333-346 has biased composition (polar residues); that stretch reads TLVTGGTQENNATS. 3 disordered regions span residues 333–427, 683–703, and 837–881; these read TLVT…EVNA, ENGR…ESLQ, and ASQK…DSND. The span at 351–390 shows a compositional bias: pro residues; it reads LMPPPPPPPPPPPPPPPPPPPRPPPPPPPIKKGAPPPAPP. Residues 400-424 show a composition bias toward low complexity; the sequence is LSPTESSRSEESSASELASESSETE. Positions 422-854 constitute an FH2 domain; it reads ETEVNAPRAK…KSQANGNSNN (433 aa). Polar residues predominate over residues 692–701; sequence STSDDNSNES. Low complexity predominate over residues 846 to 865; sequence SQANGNSNNPSSQSNPQEQQ. Over residues 870 to 881 the composition is skewed to basic and acidic residues; it reads LDHHFDSSDSND.

It belongs to the formin-like family. Class-I subfamily.

It localises to the membrane. The chain is Formin-like protein 10 (FH10) from Oryza sativa subsp. japonica (Rice).